The chain runs to 272 residues: Putative phosphoenolpyruvate synthase regulatory protein (272 aa).

ADP is bound at residue 152 to 159 (GVSRCGKT).

Belongs to the pyruvate, phosphate/water dikinase regulatory protein family. PSRP subfamily.

It carries out the reaction [pyruvate, water dikinase] + ADP = [pyruvate, water dikinase]-phosphate + AMP + H(+). It catalyses the reaction [pyruvate, water dikinase]-phosphate + phosphate + H(+) = [pyruvate, water dikinase] + diphosphate. In terms of biological role, bifunctional serine/threonine kinase and phosphorylase involved in the regulation of the phosphoenolpyruvate synthase (PEPS) by catalyzing its phosphorylation/dephosphorylation. The chain is Putative phosphoenolpyruvate synthase regulatory protein from Pseudomonas putida (strain GB-1).